Consider the following 514-residue polypeptide: Na(+)/H(+) antiporter NhaB (514 aa).

Transmembrane regions (helical) follow at residues 23–43 (LALL…PFIA), 63–83 (PLLP…TSAA), 97–117 (LLLM…LFIF), 120–140 (LLLS…AAAF), 144–164 (FLDA…FYGI), 202–222 (LMMH…VGEP), 238–258 (FFLR…LTCM), 303–323 (AIIG…VGLI), 357–377 (LTVF…APII), 391–411 (LFYL…VGTI), 447–467 (ATPN…APLI), and 475–495 (VWMA…CVEF).

The protein belongs to the NhaB Na(+)/H(+) (TC 2.A.34) antiporter family.

The protein localises to the cell inner membrane. The enzyme catalyses 2 Na(+)(in) + 3 H(+)(out) = 2 Na(+)(out) + 3 H(+)(in). Its function is as follows. Na(+)/H(+) antiporter that extrudes sodium in exchange for external protons. The chain is Na(+)/H(+) antiporter NhaB from Salmonella heidelberg (strain SL476).